The chain runs to 320 residues: Cytochrome f (320 aa).

The N-terminal stretch at 1 to 35 (MQTRNTFSWIREEITRSISVSLMIYIITWASISSA) is a signal peptide. 4 residues coordinate heme: Y36, C56, C59, and H60. A helical membrane pass occupies residues 286-306 (VQGLLFFLGSVVLAQIFLVLK).

This sequence belongs to the cytochrome f family. The 4 large subunits of the cytochrome b6-f complex are cytochrome b6, subunit IV (17 kDa polypeptide, petD), cytochrome f and the Rieske protein, while the 4 small subunits are PetG, PetL, PetM and PetN. The complex functions as a dimer. Heme is required as a cofactor.

The protein resides in the plastid. It localises to the chloroplast thylakoid membrane. Functionally, component of the cytochrome b6-f complex, which mediates electron transfer between photosystem II (PSII) and photosystem I (PSI), cyclic electron flow around PSI, and state transitions. This chain is Cytochrome f, found in Barbarea verna (Land cress).